Here is a 588-residue protein sequence, read N- to C-terminus: Nuclear hormone receptor family member nhr-23 (588 aa).

The tract at residues 50–73 (LHAKSSLQPSLSIETPKSKENDES) is disordered. The segment covering 52 to 64 (AKSSLQPSLSIET) has biased composition (polar residues). The segment at residues 160 to 235 (VIPCKVCGDK…LGMSRDAVKF (76 aa)) is a DNA-binding region (nuclear receptor). 2 consecutive NR C4-type zinc fingers follow at residues 163 to 183 (CKVC…CEGC) and 199 to 223 (CPRQ…LKKC). Residues 345–586 (PEEDVATRVI…ALYKELFTAD (242 aa)) form the NR LBD domain.

This sequence belongs to the nuclear hormone receptor family. NR1 subfamily. In terms of tissue distribution, expressed in the germline and oocytes and is a maternal gene product. In males and sperm-producing hermaphrodites, expressed in early pachytene spermatocytes, increasing in level throughout late pachytene. Expression is undetectable in meiotically dividing spermatocytes or mature spermatids.

The protein resides in the nucleus. Its function is as follows. Orphan nuclear receptor. Transcription factor. Modulates expression of target genes, such as Period protein homolog lin-42 and microRNA let-7, by binding to hormone response elements (HRE). Involved in promoting oscillatory expression of the primary transcripts of let-7 and paralogous microRNAs miR-48, miR-84, and miR-241. Plays a role in normal development and required to regulate each larval molt. Involved in regulating both the frequency and number of molts, acting as part of a negative feedback loop with the let-7 family of microRNAs, perhaps contributing to a self-sustaining molecular-genetic oscillator. Positively modulates expression of collagen and hedgehog-related genes. Involved in development of the gonad and associated epidermal structures. Required in spermatogenesis, acting following the sperm/oocyte cell fate decision, downstream of the canonical sex-determination pathway. Involved in regulating formation of the sperm-specific fibrous body-membranous organelle (FB-MO) complexes, acting independently of transcription regulator spe-44. This Caenorhabditis elegans protein is Nuclear hormone receptor family member nhr-23.